Reading from the N-terminus, the 487-residue chain is 3-octaprenyl-4-hydroxybenzoate carboxy-lyase (487 aa).

Asparagine 172 is a binding site for Mn(2+). Prenylated FMN-binding positions include 175–177, 189–191, and 194–195; these read IYR, RWL, and RG. Position 238 (glutamate 238) interacts with Mn(2+). Aspartate 287 acts as the Proton donor in catalysis.

It belongs to the UbiD family. Homohexamer. Prenylated FMN serves as cofactor. Requires Mn(2+) as cofactor.

It localises to the cell membrane. It carries out the reaction a 4-hydroxy-3-(all-trans-polyprenyl)benzoate + H(+) = a 2-(all-trans-polyprenyl)phenol + CO2. The protein operates within cofactor biosynthesis; ubiquinone biosynthesis. Functionally, catalyzes the decarboxylation of 3-octaprenyl-4-hydroxy benzoate to 2-octaprenylphenol, an intermediate step in ubiquinone biosynthesis. The chain is 3-octaprenyl-4-hydroxybenzoate carboxy-lyase from Actinobacillus pleuropneumoniae serotype 7 (strain AP76).